The primary structure comprises 390 residues: 8-amino-7-oxononanoate synthase (390 aa).

R19 is a substrate binding site. 106–107 (GY) contributes to the pyridoxal 5'-phosphate binding site. H131 provides a ligand contact to substrate. Pyridoxal 5'-phosphate is bound by residues S176, H204, and T233. The residue at position 236 (K236) is an N6-(pyridoxal phosphate)lysine. Position 350 (T350) interacts with substrate.

The protein belongs to the class-II pyridoxal-phosphate-dependent aminotransferase family. BioF subfamily. As to quaternary structure, homodimer. It depends on pyridoxal 5'-phosphate as a cofactor.

It catalyses the reaction 6-carboxyhexanoyl-[ACP] + L-alanine + H(+) = (8S)-8-amino-7-oxononanoate + holo-[ACP] + CO2. Its pathway is cofactor biosynthesis; biotin biosynthesis. Functionally, catalyzes the decarboxylative condensation of pimeloyl-[acyl-carrier protein] and L-alanine to produce 8-amino-7-oxononanoate (AON), [acyl-carrier protein], and carbon dioxide. This is 8-amino-7-oxononanoate synthase from Pseudomonas putida (strain GB-1).